The sequence spans 206 residues: Small ribosomal subunit protein uS4 (206 aa).

The 73-residue stretch at 96–168 folds into the S4 RNA-binding domain; the sequence is SRLDNVVYRM…LELAEQREKP (73 aa).

The protein belongs to the universal ribosomal protein uS4 family. Part of the 30S ribosomal subunit. Contacts protein S5. The interaction surface between S4 and S5 is involved in control of translational fidelity.

In terms of biological role, one of the primary rRNA binding proteins, it binds directly to 16S rRNA where it nucleates assembly of the body of the 30S subunit. Its function is as follows. With S5 and S12 plays an important role in translational accuracy. The chain is Small ribosomal subunit protein uS4 from Baumannia cicadellinicola subsp. Homalodisca coagulata.